The chain runs to 409 residues: Tyrosine--tRNA ligase (409 aa).

An L-tyrosine-binding site is contributed by Tyr-35. The 'HIGH' region signature appears at 40–49 (CTAESLHVGS). The L-tyrosine site is built by Tyr-172 and Gln-176. The short motif at 232–236 (KMGKT) is the 'KMSKS' region element. Lys-235 provides a ligand contact to ATP. Positions 343-409 (ISILDLVILS…KKKHIKVELI (67 aa)) constitute an S4 RNA-binding domain.

Belongs to the class-I aminoacyl-tRNA synthetase family. TyrS type 1 subfamily. In terms of assembly, homodimer.

The protein resides in the cytoplasm. The enzyme catalyses tRNA(Tyr) + L-tyrosine + ATP = L-tyrosyl-tRNA(Tyr) + AMP + diphosphate + H(+). Its function is as follows. Catalyzes the attachment of tyrosine to tRNA(Tyr) in a two-step reaction: tyrosine is first activated by ATP to form Tyr-AMP and then transferred to the acceptor end of tRNA(Tyr). The chain is Tyrosine--tRNA ligase from Pelagibacter ubique (strain HTCC1062).